Consider the following 272-residue polypeptide: Phosphatidylglycerol--prolipoprotein diacylglyceryl transferase (272 aa).

The next 4 membrane-spanning stretches (helical) occupy residues 21-41 (IAVHWYGIMYALALLSAIFVA), 60-80 (YIWWAEIGVILGARLGYVLFY), 101-121 (GVYAGISGMSYHGAFFGFIIA), and 131-151 (VSFWFITDIAVLGVSAAYIFG). A 1,2-diacyl-sn-glycero-3-phospho-(1'-sn-glycerol) is bound at residue arginine 152. The next 3 helical transmembrane spans lie at 181–201 (PSQIYEAILEGLFVFLILAFY), 209–229 (GQLALMYGILYAIARIIAEFF), and 244–264 (LTMGILQSLIILIICVGFYVV).

This sequence belongs to the Lgt family.

The protein resides in the cell inner membrane. It catalyses the reaction L-cysteinyl-[prolipoprotein] + a 1,2-diacyl-sn-glycero-3-phospho-(1'-sn-glycerol) = an S-1,2-diacyl-sn-glyceryl-L-cysteinyl-[prolipoprotein] + sn-glycerol 1-phosphate + H(+). Its pathway is protein modification; lipoprotein biosynthesis (diacylglyceryl transfer). Catalyzes the transfer of the diacylglyceryl group from phosphatidylglycerol to the sulfhydryl group of the N-terminal cysteine of a prolipoprotein, the first step in the formation of mature lipoproteins. This chain is Phosphatidylglycerol--prolipoprotein diacylglyceryl transferase, found in Aliarcobacter butzleri (strain RM4018) (Arcobacter butzleri).